Reading from the N-terminus, the 86-residue chain is UPF0125 protein bbp_234 (86 aa).

This sequence belongs to the UPF0125 (RnfH) family.

This chain is UPF0125 protein bbp_234, found in Buchnera aphidicola subsp. Baizongia pistaciae (strain Bp).